The following is a 189-amino-acid chain: Guanylate kinase (189 aa).

Residues 8-186 (GKLTVITGPS…AVIELESLMG (179 aa)) enclose the Guanylate kinase-like domain. Residue 15–22 (GPSGVGKG) coordinates ATP.

Belongs to the guanylate kinase family.

The protein resides in the cytoplasm. It catalyses the reaction GMP + ATP = GDP + ADP. In terms of biological role, essential for recycling GMP and indirectly, cGMP. In Prochlorococcus marinus (strain MIT 9313), this protein is Guanylate kinase.